Consider the following 459-residue polypeptide: FAD-dependent monooxygenase CTB5 (459 aa).

Residues 10–187 (SDLHPSCIAL…TAVTLKAFEQ (178 aa)) enclose the FAD-binding PCMH-type domain.

The protein belongs to the oxygen-dependent FAD-linked oxidoreductase family.

It participates in mycotoxin biosynthesis. Functionally, FAD-dependent monooxygenase; part of the gene cluster that mediates the biosynthesis of cercosporin, a light-activated, non-host-selective toxin. The perylenequinone chromophore of cercosporin absorbs light energy to attain an electronically-activated triplet state and produces active oxygen species such as the hydroxyl radical, superoxide, hydrogen peroxide or singlet oxygen upon reaction with oxygen molecules. These reactive oxygen species cause damage to various cellular components including lipids, proteins and nucleic acids. The first step of cercosporin biosynthesis is performed by the polyketide synthase CTB1 which catalyzes the formation of nor-toralactone. The starter unit acyltransferase (SAT) domain of CTB1 initiates polyketide extension by the selective utilization of acetyl-CoA, which is elongated to the heptaketide in the beta-ketoacyl synthase (KS) domain by successive condensations with six malonyl units introduced by the malonyl acyltransferase (MAT) domain. The product template (PT) domain catalyzes C4-C9 and C2-C11 aldol cyclizations and dehydrations to a trihydroxynaphthalene, which is thought to be delivered to the thioesterase (TE) domain for product release. The bifunctional enzyme CTB3 then methylates nor-toralactone to toralactone before conducting an unusual oxidative aromatic ring opening. The O-methyltransferase CTB2 further methylates the nascent OH-6 of the CBT3 product, blocking further oxidation at this site before the reductase CTB6 reduces the 2-oxopropyl ketone at position C7, giving naphthalene. The FAD-dependent monooxygenase CTB5 in concert with the multicopper oxidase CTB12 are responsible for homodimerization of naphthalene with CTB7 installing the dioxepine moiety, finally producing cercosporin. The fasciclin domain-containing protein CTB11 might act with CTB5 and CTB12 whereas the roles of CTB9 and CTB10 have still to be elucidated. This is FAD-dependent monooxygenase CTB5 from Cercospora nicotianae (Barn spot disease fungus).